The sequence spans 92 residues: UPF0473 protein BCE33L4129 (92 aa).

It belongs to the UPF0473 family.

In Bacillus cereus (strain ZK / E33L), this protein is UPF0473 protein BCE33L4129.